Consider the following 1097-residue polypeptide: DNA-directed RNA polymerase subunit beta (1097 aa).

Residues 1073 to 1097 (DVNPRRSTPSRPTYESLGVADYDED) form a disordered region.

This sequence belongs to the RNA polymerase beta chain family. In cyanobacteria the RNAP catalytic core is composed of 2 alpha, 1 beta, 1 beta', 1 gamma and 1 omega subunit. When a sigma factor is associated with the core the holoenzyme is formed, which can initiate transcription.

It carries out the reaction RNA(n) + a ribonucleoside 5'-triphosphate = RNA(n+1) + diphosphate. DNA-dependent RNA polymerase catalyzes the transcription of DNA into RNA using the four ribonucleoside triphosphates as substrates. In Synechococcus sp. (strain RCC307), this protein is DNA-directed RNA polymerase subunit beta.